The primary structure comprises 130 residues: Small ribosomal subunit protein uS9 (130 aa).

It belongs to the universal ribosomal protein uS9 family.

The polypeptide is Small ribosomal subunit protein uS9 (Neisseria meningitidis serogroup C (strain 053442)).